Here is a 318-residue protein sequence, read N- to C-terminus: Very-long-chain 3-oxoacyl-CoA reductase-A (318 aa).

Residues 15 to 35 traverse the membrane as a helical segment; the sequence is FWYLGVLAAAWWGLRAACCLL. Position 54–83 (54–83) interacts with NADP(+); sequence GKWAVVTGATDGIGKAYAEELARRGMSIVL. The next 2 helical transmembrane spans lie at 187-207 and 281-301; these read GVILNISSASGMYPVPLLTVY and AIMGWISTSLVPVSVAISMGM. Ser-194 contributes to the substrate binding site. Tyr-207 (proton acceptor) is an active-site residue.

It belongs to the short-chain dehydrogenases/reductases (SDR) family. 17-beta-HSD 3 subfamily.

It is found in the endoplasmic reticulum membrane. The enzyme catalyses a very-long-chain (3R)-3-hydroxyacyl-CoA + NADP(+) = a very-long-chain 3-oxoacyl-CoA + NADPH + H(+). The catalysed reaction is 17beta-estradiol + NAD(+) = estrone + NADH + H(+). It catalyses the reaction 17beta-estradiol + NADP(+) = estrone + NADPH + H(+). It participates in lipid metabolism; fatty acid biosynthesis. Its pathway is steroid biosynthesis; estrogen biosynthesis. Its function is as follows. Catalyzes the second of the four reactions of the long-chain fatty acids elongation cycle. This endoplasmic reticulum-bound enzymatic process, allows the addition of two carbons to the chain of long- and very long-chain fatty acids/VLCFAs per cycle. This enzyme has a 3-ketoacyl-CoA reductase activity, reducing 3-ketoacyl-CoA to 3-hydroxyacyl-CoA, within each cycle of fatty acid elongation. Thereby, it may participate in the production of VLCFAs of different chain lengths that are involved in multiple biological processes as precursors of membrane lipids and lipid mediators. May also catalyze the transformation of estrone (E1) into estradiol (E2) and play a role in estrogen formation. The chain is Very-long-chain 3-oxoacyl-CoA reductase-A (hsd17b12-a) from Xenopus laevis (African clawed frog).